The sequence spans 327 residues: DNA-directed RNA polymerase subunit alpha (327 aa).

The interval 1–233 (MQNSASEFLK…DQLSIFADLQ (233 aa)) is alpha N-terminal domain (alpha-NTD). The interval 247 to 327 (IDPILLRPVD…NWPPAGLEKP (81 aa)) is alpha C-terminal domain (alpha-CTD).

Belongs to the RNA polymerase alpha chain family. In terms of assembly, homodimer. The RNAP catalytic core consists of 2 alpha, 1 beta, 1 beta' and 1 omega subunit. When a sigma factor is associated with the core the holoenzyme is formed, which can initiate transcription.

The enzyme catalyses RNA(n) + a ribonucleoside 5'-triphosphate = RNA(n+1) + diphosphate. Its function is as follows. DNA-dependent RNA polymerase catalyzes the transcription of DNA into RNA using the four ribonucleoside triphosphates as substrates. In Chromobacterium violaceum (strain ATCC 12472 / DSM 30191 / JCM 1249 / CCUG 213 / NBRC 12614 / NCIMB 9131 / NCTC 9757 / MK), this protein is DNA-directed RNA polymerase subunit alpha.